A 458-amino-acid chain; its full sequence is MPIATTNPATGETVKTFTAASNDEVDAAIARAYARFQDYRRNTTFAQRAEWAHATADLIEAEADQTAALMTLEMGKTIASAKAEVLKSAKGFRYYADNAAALLADEPADAGKVGASQAYTRYQPLGVVLAVMPWNFPLWQAGRFAAPALMAGNVGLLKHASNVPQSALYLADVIARAGFPDGCFQTLLVSASAVEGILRDPRVAAATLTGSEPAGQSVGAIAGDEIKPTVLELGGSDPFIVMPSADLDKAVSTAVTGRVQNNGQSCIAAKRFIAHADIYDAFVDKFVEQMSALTVGDPTDPQTQVGPLATEQSRDEIAQQVDDAAAAGAVIRCGGKPLAGPGWYYPPTVITDITKDMNLYTEEVFGPVASVYRAADIDEAIEIANATTFGLGSNAWTQDEAEQRRFINDIEAGQVFINGMTVSYPELPFGGIKRSGYGRELAGHGIREFCNIKTVWVG.

Residues 134 to 135, 158 to 161, and 210 to 211 contribute to the NADP(+) site; these read WN, KHAS, and GS. The active-site Proton acceptor is E232. Position 233 (L233) interacts with NADP(+). C266 functions as the Nucleophile in the catalytic mechanism. E363 provides a ligand contact to NADP(+).

Belongs to the aldehyde dehydrogenase family.

The enzyme catalyses succinate semialdehyde + NADP(+) + H2O = succinate + NADPH + 2 H(+). Functionally, catalyzes the NADP(+)-dependent oxidation of succinate semialdehyde to succinate. It is believed to be the main source of succinate semialdehyde dehydrogenase activity in Mycobacterium. The sequence is that of Succinate-semialdehyde dehydrogenase [NADP(+)] 1 (gabD1) from Mycobacterium ulcerans (strain Agy99).